We begin with the raw amino-acid sequence, 283 residues long: Pantothenate synthetase (283 aa).

31 to 38 contributes to the ATP binding site; it reads MGALHDGH. H38 acts as the Proton donor in catalysis. Position 62 (Q62) interacts with (R)-pantoate. Q62 lines the beta-alanine pocket. 148-151 is a binding site for ATP; that stretch reads GKKD. Residue Q154 participates in (R)-pantoate binding. ATP-binding positions include V177 and 185–188; that span reads KSSR.

This sequence belongs to the pantothenate synthetase family. In terms of assembly, homodimer.

It is found in the cytoplasm. It carries out the reaction (R)-pantoate + beta-alanine + ATP = (R)-pantothenate + AMP + diphosphate + H(+). Its pathway is cofactor biosynthesis; (R)-pantothenate biosynthesis; (R)-pantothenate from (R)-pantoate and beta-alanine: step 1/1. Functionally, catalyzes the condensation of pantoate with beta-alanine in an ATP-dependent reaction via a pantoyl-adenylate intermediate. The protein is Pantothenate synthetase of Staphylococcus aureus (strain bovine RF122 / ET3-1).